The primary structure comprises 153 residues: MTHDNKLQVEAIKRGTVIDHIPAQIGFKLLSLFKLTETDQRITIGLNLPSGEMGRKDLIKIENTFLSEDQVDQLALYAPQATVNRIDNYEVVGKSRPSLPERIDNVLVCPNSNCISHAEPVSSSFTVRKRANDIALKCKYCEKEFSHNVVLAN.

Residues cysteine 109, cysteine 114, cysteine 138, and cysteine 141 each contribute to the Zn(2+) site.

This sequence belongs to the PyrI family. As to quaternary structure, contains catalytic and regulatory chains. Zn(2+) serves as cofactor.

In terms of biological role, involved in allosteric regulation of aspartate carbamoyltransferase. In Escherichia coli O7:K1 (strain IAI39 / ExPEC), this protein is Aspartate carbamoyltransferase regulatory chain.